Reading from the N-terminus, the 342-residue chain is tRNA N6-adenosine threonylcarbamoyltransferase (342 aa).

Residues His-114 and His-118 each coordinate Fe cation. Residues 136–140, Asp-169, Gly-182, Asp-186, and Asn-275 each bind substrate; that span reads LVSGG. Asp-301 provides a ligand contact to Fe cation.

Belongs to the KAE1 / TsaD family. It depends on Fe(2+) as a cofactor.

The protein localises to the cytoplasm. It carries out the reaction L-threonylcarbamoyladenylate + adenosine(37) in tRNA = N(6)-L-threonylcarbamoyladenosine(37) in tRNA + AMP + H(+). In terms of biological role, required for the formation of a threonylcarbamoyl group on adenosine at position 37 (t(6)A37) in tRNAs that read codons beginning with adenine. Is involved in the transfer of the threonylcarbamoyl moiety of threonylcarbamoyl-AMP (TC-AMP) to the N6 group of A37, together with TsaE and TsaB. TsaD likely plays a direct catalytic role in this reaction. This Streptococcus pyogenes serotype M2 (strain MGAS10270) protein is tRNA N6-adenosine threonylcarbamoyltransferase.